Here is a 489-residue protein sequence, read N- to C-terminus: Diaminopimelate decarboxylase 2, chloroplastic (489 aa).

A chloroplast-targeting transit peptide spans 1-50; it reads MAAVTQFLSQPSSIRGTLNQYQLNQTSLSRIPFLSLKSTLKPLKRLSVKA. At Ala-51 the chain carries N-acetylalanine. Lys-130 is subject to N6-(pyridoxal phosphate)lysine. Pyridoxal 5'-phosphate contacts are provided by residues Gly-309 and 345-348; that span reads EPGR. Residues Arg-348, Arg-384, and Tyr-388 each coordinate substrate. The active-site Proton donor is Cys-416. The substrate site is built by Glu-417 and Tyr-445. Residue Tyr-445 participates in pyridoxal 5'-phosphate binding.

It belongs to the Orn/Lys/Arg decarboxylase class-II family. LysA subfamily. Homodimer. The cofactor is pyridoxal 5'-phosphate.

The protein resides in the plastid. Its subcellular location is the chloroplast. It catalyses the reaction meso-2,6-diaminopimelate + H(+) = L-lysine + CO2. Its pathway is amino-acid biosynthesis; L-lysine biosynthesis via DAP pathway; L-lysine from DL-2,6-diaminopimelate: step 1/1. Its function is as follows. Specifically catalyzes the decarboxylation of meso-diaminopimelate (meso-DAP) to L-lysine. This is Diaminopimelate decarboxylase 2, chloroplastic (LYSA2) from Arabidopsis thaliana (Mouse-ear cress).